The chain runs to 230 residues: 7-cyano-7-deazaguanine synthase (230 aa).

9-19 contributes to the ATP binding site; the sequence is ISGGLDSTTCL. Positions 192, 202, 205, and 208 each coordinate Zn(2+).

The protein belongs to the QueC family. Requires Zn(2+) as cofactor.

It carries out the reaction 7-carboxy-7-deazaguanine + NH4(+) + ATP = 7-cyano-7-deazaguanine + ADP + phosphate + H2O + H(+). Its pathway is purine metabolism; 7-cyano-7-deazaguanine biosynthesis. Catalyzes the ATP-dependent conversion of 7-carboxy-7-deazaguanine (CDG) to 7-cyano-7-deazaguanine (preQ(0)). In Myxococcus xanthus (strain DK1622), this protein is 7-cyano-7-deazaguanine synthase.